Here is a 444-residue protein sequence, read N- to C-terminus: Trigger factor (444 aa).

In terms of domain architecture, PPIase FKBP-type spans 185–270 (GDKLIIDFEG…VNEIQIAKDF (86 aa)).

The protein belongs to the FKBP-type PPIase family. Tig subfamily.

The protein localises to the cytoplasm. The catalysed reaction is [protein]-peptidylproline (omega=180) = [protein]-peptidylproline (omega=0). Its function is as follows. Involved in protein export. Acts as a chaperone by maintaining the newly synthesized protein in an open conformation. Functions as a peptidyl-prolyl cis-trans isomerase. The protein is Trigger factor of Wolbachia pipientis wMel.